A 581-amino-acid polypeptide reads, in one-letter code: 2-hydroxyacyl-CoA lyase 1 (581 aa).

2 positions are modified to phosphoserine: serine 4 and serine 6. Position 63 (glutamate 63) interacts with thiamine diphosphate. An N6-succinyllysine mark is found at lysine 354, lysine 361, and lysine 368. Residues 404–487 form a thiamine pyrophosphate binding region; sequence TMDIGRTMLQ…IILLVVNNNG (84 aa). Mg(2+) is bound by residues aspartate 458 and asparagine 485. Residues 579–581 carry the Microbody targeting signal motif; sequence SNM.

The protein belongs to the TPP enzyme family. As to quaternary structure, homotetramer. Mg(2+) serves as cofactor. It depends on thiamine diphosphate as a cofactor. As to expression, predominanly expressed in liver.

Its subcellular location is the peroxisome. It carries out the reaction a 2-hydroxy-3-methyl fatty acyl-CoA = a 2-methyl-branched fatty aldehyde + formyl-CoA. The catalysed reaction is an (R)-2-hydroxy-long-chain-fatty acyl-CoA = a long-chain fatty aldehyde + formyl-CoA. The enzyme catalyses 2-hydroxy-3-methylhexadecanoyl-CoA = 2-methylpentadecanal + formyl-CoA. It catalyses the reaction 2-hydroxyoctadecanoyl-CoA = heptadecanal + formyl-CoA. It carries out the reaction 2-hydroxyphytanoyl-CoA = 2,6,10,14-tetramethylpentadecanal + formyl-CoA. It functions in the pathway lipid metabolism; fatty acid metabolism. In terms of biological role, peroxisomal 2-OH acyl-CoA lyase involved in the cleavage (C1 removal) reaction in the fatty acid alpha-oxydation in a thiamine pyrophosphate (TPP)-dependent manner. Involved in the degradation of 3-methyl-branched fatty acids like phytanic acid and the shortening of 2-hydroxy long-chain fatty acids. Plays a significant role in the biosynthesis of heptadecanal in the liver. This chain is 2-hydroxyacyl-CoA lyase 1 (Hacl1), found in Mus musculus (Mouse).